Here is a 91-residue protein sequence, read N- to C-terminus: Small ribosomal subunit protein uS19 (91 aa).

It belongs to the universal ribosomal protein uS19 family.

Its function is as follows. Protein S19 forms a complex with S13 that binds strongly to the 16S ribosomal RNA. This chain is Small ribosomal subunit protein uS19, found in Ralstonia nicotianae (strain ATCC BAA-1114 / GMI1000) (Ralstonia solanacearum).